Consider the following 953-residue polypeptide: UvrABC system protein A (953 aa).

33-40 is an ATP binding site; the sequence is GLSGSGKS. ABC transporter domains follow at residues 320–599 and 619–949; these read WGST…EESI and GHDN…RYLK. 652-659 is an ATP binding site; it reads GVSGSGKS. The segment at 752-778 adopts a C4-type zinc-finger fold; sequence CEACQGDGLIKIEMHFLPDVYVKCDIC.

The protein belongs to the ABC transporter superfamily. UvrA family. Forms a heterotetramer with UvrB during the search for lesions.

It is found in the cytoplasm. Functionally, the UvrABC repair system catalyzes the recognition and processing of DNA lesions. UvrA is an ATPase and a DNA-binding protein. A damage recognition complex composed of 2 UvrA and 2 UvrB subunits scans DNA for abnormalities. When the presence of a lesion has been verified by UvrB, the UvrA molecules dissociate. The polypeptide is UvrABC system protein A (Rickettsia bellii (strain RML369-C)).